Consider the following 227-residue polypeptide: PKHD-type hydroxylase azo0608 (227 aa).

A Fe2OG dioxygenase domain is found at 78-178; it reads RVLTPFFNRY…RVACFMFMQS (101 aa). 3 residues coordinate Fe cation: H97, D99, and H159. 2-oxoglutarate is bound at residue R169.

Fe(2+) serves as cofactor. It depends on L-ascorbate as a cofactor.

The polypeptide is PKHD-type hydroxylase azo0608 (Azoarcus sp. (strain BH72)).